We begin with the raw amino-acid sequence, 373 residues long: Saccharopine dehydrogenase [NAD(+), L-lysine-forming] (373 aa).

Residue Ala2 is modified to N-acetylalanine; partial. Positions 18 and 77 each coordinate L-saccharopine. Lys77 acts as the Proton acceptor in catalysis. His96 serves as the catalytic Proton donor. Gln101 lines the L-saccharopine pocket. Residue Arg130 coordinates NAD(+). L-saccharopine-binding residues include Arg131 and Phe135. NAD(+)-binding positions include 203 to 204 (GR), Asp227, Thr231, Tyr251, and Val278. The cysteines at positions 205 and 249 are disulfide-linked. 279–281 (SAD) contacts L-saccharopine. 318 to 321 (IDHL) lines the NAD(+) pocket. Positions 371–373 (SRL) match the Microbody targeting signal motif.

It belongs to the AlaDH/PNT family. Monomer.

The protein resides in the peroxisome. It carries out the reaction L-saccharopine + NAD(+) + H2O = L-lysine + 2-oxoglutarate + NADH + H(+). The protein operates within amino-acid biosynthesis; L-lysine biosynthesis via AAA pathway; L-lysine from L-alpha-aminoadipate (fungal route): step 3/3. Inhibited by p-chloromercuribenzoate and iodoacetate by modification of the active site cysteine residue. Inhibited by diethyl pyrocarbonate by modification of histidine residues. Inhibited by pyridoxal 5'-phosphate by modification of an essential lysine residue. Catalyzes the NAD(+)-dependent cleavage of saccharopine to L-lysine and 2-oxoglutarate, the final step in the alpha-aminoadipate (AAA) pathway for lysine biosynthesis. In Saccharomyces cerevisiae (strain ATCC 204508 / S288c) (Baker's yeast), this protein is Saccharopine dehydrogenase [NAD(+), L-lysine-forming].